Consider the following 149-residue polypeptide: Calmodulin-3 (149 aa).

Alanine 2 carries the N-acetylalanine modification. 4 EF-hand domains span residues 8–43, 44–79, 81–116, and 117–149; these read DQIA…LGQN, PTEA…KMKD, DSEE…LGEK, and LTDE…MMAK. Ca(2+) is bound by residues aspartate 21, aspartate 23, aspartate 25, cysteine 27, glutamate 32, aspartate 57, aspartate 59, asparagine 61, threonine 63, glutamate 68, aspartate 94, aspartate 96, asparagine 98, and glutamate 105. The residue at position 116 (lysine 116) is an N6,N6,N6-trimethyllysine. Residues aspartate 130, aspartate 132, aspartate 134, glutamine 136, and glutamate 141 each contribute to the Ca(2+) site.

It belongs to the calmodulin family.

Calmodulin mediates the control of a large number of enzymes, ion channels and other proteins by Ca(2+). Among the enzymes to be stimulated by the calmodulin-Ca(2+) complex are a number of protein kinases and phosphatases. This chain is Calmodulin-3 (CAM3), found in Oryza sativa subsp. japonica (Rice).